The following is a 185-amino-acid chain: Ribosome-recycling factor (185 aa).

The interval 143 to 163 (RKDGEAGEDEVARAEKDLDKS) is disordered.

This sequence belongs to the RRF family.

The protein resides in the cytoplasm. Functionally, responsible for the release of ribosomes from messenger RNA at the termination of protein biosynthesis. May increase the efficiency of translation by recycling ribosomes from one round of translation to another. The sequence is that of Ribosome-recycling factor from Mycobacterium marinum (strain ATCC BAA-535 / M).